The chain runs to 193 residues: dTTP/UTP pyrophosphatase (193 aa).

D75 acts as the Proton acceptor in catalysis.

The protein belongs to the Maf family. YhdE subfamily. A divalent metal cation is required as a cofactor.

It is found in the cytoplasm. The enzyme catalyses dTTP + H2O = dTMP + diphosphate + H(+). The catalysed reaction is UTP + H2O = UMP + diphosphate + H(+). Nucleoside triphosphate pyrophosphatase that hydrolyzes dTTP and UTP. May have a dual role in cell division arrest and in preventing the incorporation of modified nucleotides into cellular nucleic acids. This chain is dTTP/UTP pyrophosphatase, found in Chlorobium luteolum (strain DSM 273 / BCRC 81028 / 2530) (Pelodictyon luteolum).